A 159-amino-acid polypeptide reads, in one-letter code: MQKMAMLMACLACMGLAAAFSPATLGVNKPSHRQQAPVMSQVARRELLSKVLGAAALLGAASADAKVNYDAVAYLGGAQQIDVNNANIRVYQKLPGMYPSAAGKLCTNGPYVDLKDMYAKAKLSKEEEAIVKEFDKDFLFLKPQIEYVVDNLNNGLYRR.

The protein belongs to the PsbU family. As to quaternary structure, PSII is composed of 1 copy each of membrane proteins PsbA, PsbB, PsbC, PsbD, PsbE, PsbF, PsbH, PsbI, PsbJ, PsbK, PsbL, PsbM, PsbT, PsbX, PsbY, PsbZ, Psb30/Ycf12, at least 3 peripheral proteins of the oxygen-evolving complex and a large number of cofactors. It forms dimeric complexes. Part of the oxygen-evolving complex of photosystem II.

It is found in the plastid. Its subcellular location is the chloroplast thylakoid membrane. One of the extrinsic, lumenal subunits of photosystem II (PSII). PSII is a light-driven water plastoquinone oxidoreductase, using light energy to abstract electrons from H(2)O, generating a proton gradient subsequently used for ATP formation. The extrinsic proteins stabilize the structure of photosystem II oxygen-evolving complex (OEC), the ion environment of oxygen evolution and protect the OEC against heat-induced inactivation. In Karenia brevis (Red tide dinoflagellate), this protein is Photosystem II extrinsic protein U, chloroplastic.